A 221-amino-acid polypeptide reads, in one-letter code: MYLLFIILMYLLPFSFQTSEPAYDKSVCDSGNKEYMGIEVYVEATLDEPLRQTTCESEIHKYGASVSNGGLNISVDLLNCFLNFHTVGVYTNRDTVYAKFASLDPWTTEPMNSMTHDDLVKLTEECIVDIYLKCEVDKTKDFMKTNDNRLKPRDFKTVPPSNVGSMIELQSDYCVNDVTAYVKIYDECGNIKQHSIPTLRDYFTTKNGQPRKILKKKIDNC.

Residues 1–17 form the signal peptide; the sequence is MYLLFIILMYLLPFSFQ. Residue Asn-72 is glycosylated (N-linked (GlcNAc...) asparagine; by host).

The protein belongs to the orthopoxvirus OPG170 family.

It localises to the secreted. May interact with several cellular chemokines to interfere with chemokine-glycosaminoglycan (GAG) interactions at the cell surface to alter chemotaxis of nearby responsive cells. The chain is Protein OPG170 (OPG170) from Monkeypox virus.